The following is a 393-amino-acid chain: Pinosylvin synthase (393 aa).

57 to 60 lines the substrate pocket; sequence KFKR. The active site involves cysteine 167. Substrate contacts are provided by residues leucine 270 and 308-310; that span reads GGR.

It belongs to the thiolase-like superfamily. Chalcone/stilbene synthases family. In terms of assembly, homodimer.

The protein localises to the cytoplasm. The enzyme catalyses (E)-cinnamoyl-CoA + 3 malonyl-CoA + 3 H(+) = (E)-pinosylvin + 4 CO2 + 4 CoA. It carries out the reaction 3-phenylpropanoyl-CoA + 3 malonyl-CoA + 3 H(+) = dihydropinosylvin + 4 CO2 + 4 CoA. It functions in the pathway phytoalexin biosynthesis; hydropinosylvin biosynthesis. Functionally, catalyzes the production of pinosylvin from cinnamoyl-CoA and malonyl-CoA, and dihydropinosylvin from dihydrocinnamoyl-CoA. In Pinus sylvestris (Scotch pine), this protein is Pinosylvin synthase.